We begin with the raw amino-acid sequence, 613 residues long: MGALRPTLLPPSLPLLLLLMLGMGCWAREVLVPEGPLYRVAGTAVSISCNVTGYEGPAQQNFEWFLYRPEAPDTALGIVSTKDTQFSYAVFKSRVVAGEVQVQRLQGDAVVLKIARLQAQDAGIYECHTPSTDTRYLGSYSGKVELRVLPDVLQVSAAPPGPRGRQAPTSPPRMTVHEGQELALGCLARTSTQKHTHLAVSFGRSVPEAPVGRSTLQEVVGIRSDLAVEAGAPYAERLAAGELRLGKEGTDRYRMVVGGAQAGDAGTYHCTAAEWIQDPDGSWAQIAEKRAVLAHVDVQTLSSQLAVTVGPGERRIGPGEPLELLCNVSGALPPAGRHAAYSVGWEMAPAGAPGPGRLVAQLDTEGVGSLGPGYEGRHIAMEKVASRTYRLRLEAARPGDAGTYRCLAKAYVRGSGTRLREAASARSRPLPVHVREEGVVLEAVAWLAGGTVYRGETASLLCNISVRGGPPGLRLAASWWVERPEDGELSSVPAQLVGGVGQDGVAELGVRPGGGPVSVELVGPRSHRLRLHSLGPEDEGVYHCAPSAWVQHADYSWYQAGSARSGPVTVYPYMHALDTLFVPLLVGTGVALVTGATVLGTITCCFMKRLRKR.

The first 27 residues, 1–27 (MGALRPTLLPPSLPLLLLLMLGMGCWA), serve as a signal peptide directing secretion. 4 consecutive Ig-like C2-type domains span residues 28–149 (REVL…LRVL), 162–286 (PRGR…WAQI), 303–424 (SQLA…EAAS), and 431–560 (PVHV…WYQA). Residues 28 to 579 (REVLVPEGPL…VYPYMHALDT (552 aa)) are Extracellular-facing. Residues C49 and C127 are joined by a disulfide bond. N-linked (GlcNAc...) asparagine glycosylation occurs at N50. The tract at residues 155-174 (VSAAPPGPRGRQAPTSPPRM) is disordered. C186 and C270 are disulfide-bonded. Positions 274–276 (EWI) match the EWI motif motif. 2 disulfides stabilise this stretch: C326-C406 and C462-C544. 2 N-linked (GlcNAc...) asparagine glycosylation sites follow: N327 and N463. S518 is subject to Phosphoserine. A helical transmembrane segment spans residues 580–600 (LFVPLLVGTGVALVTGATVLG). The Cytoplasmic segment spans residues 601–613 (TITCCFMKRLRKR). 2 S-palmitoyl cysteine lipidation sites follow: C604 and C605.

As to quaternary structure, interacts directly with CD82, CD81/tetraspanin-28 and CD9/tetraspanin-29. Also interacts with integrin alpha-3/beta-1 and integrin alpha-4/beta-1. Interacts with HSPA8; this interaction modulates migratory and antigen-presenting capacities of dendritic cells. As to expression, expressed in brain, kidney, testis, liver and placenta with moderate expression in all other tissues. Detected on a majority of B-cells, T-cells, and natural killer cells. Expressed on dendritic cells.

It localises to the cell membrane. Its function is as follows. Member of the immunoglobulin superfamily (IgSF) that links tetraspanin-enriched microdomains to the actin cytoskeleton and plays several important roles in innate and adaptive immunity. Acts as an inducible receptor of HSPA8 on dendritic cells to enhance the CCL21/SLC-dependent migration of activated mature dendritic cells while attenuating their antigen-specific stimulatory capacities. In complex with alpha-actinins ACTN1 and ACTN4, regulates actin dynamics in the immune synapse and subsequent T-cell activation. Inhibits the entry of several viruses such as hepatitis C Virus (HCV) or HIV-1. Mechanistically, promotes a change in CD81 organization at the plasma membrane by significantly restricting its diffusion which in turn influences CD81 interaction with Claudin-1/CLDN1, preventing CLDN1 from acting as a co-receptor required for HCV entry. Accumulates at the presynaptic terminal, the producer cell side of the virological synapse, to prevent HIV-1 Env-mediated cell-cell fusion. Highly expressed on malignant cells with antigen presentation defects, interacts with NK receptor KIR3DL2 to suppress NK-cell cytotoxicity. May participate in the regulation of neurite outgrowth and maintenance of the neural network in the adult brain. This is Immunoglobulin superfamily member 8 (IGSF8) from Homo sapiens (Human).